Consider the following 95-residue polypeptide: Sec-independent protein translocase protein TatA (95 aa).

The helical transmembrane segment at M1–G21 threads the bilayer. The tract at residues G42–V95 is disordered.

This sequence belongs to the TatA/E family. As to quaternary structure, the Tat system comprises two distinct complexes: a TatABC complex, containing multiple copies of TatA, TatB and TatC subunits, and a separate TatA complex, containing only TatA subunits. Substrates initially bind to the TatABC complex, which probably triggers association of the separate TatA complex to form the active translocon.

Its subcellular location is the cell inner membrane. Functionally, part of the twin-arginine translocation (Tat) system that transports large folded proteins containing a characteristic twin-arginine motif in their signal peptide across membranes. TatA could form the protein-conducting channel of the Tat system. This is Sec-independent protein translocase protein TatA from Methylorubrum extorquens (strain CM4 / NCIMB 13688) (Methylobacterium extorquens).